The sequence spans 254 residues: 5-oxoprolinase subunit A (254 aa).

This sequence belongs to the LamB/PxpA family. In terms of assembly, forms a complex composed of PxpA, PxpB and PxpC.

It carries out the reaction 5-oxo-L-proline + ATP + 2 H2O = L-glutamate + ADP + phosphate + H(+). Its function is as follows. Catalyzes the cleavage of 5-oxoproline to form L-glutamate coupled to the hydrolysis of ATP to ADP and inorganic phosphate. This is 5-oxoprolinase subunit A from Acinetobacter baumannii (strain ATCC 17978 / DSM 105126 / CIP 53.77 / LMG 1025 / NCDC KC755 / 5377).